A 372-amino-acid chain; its full sequence is MVTGCVDLHQSFKSADSSSVPIPPPLPSKSDGLKKKLGHSSVSTATRDMWDRLFNDGYKADVVIYTDNGSIIYAHANILGTASTVIKGMLKQAKRHGKWHTISIRGVPHDAVRVFIRFLYSSCYEKEEMNEFIMHLLLLSHAYVVPQLKRVCEWHLEHGLLTTENVVDVFQLALLCDFPRLSLISHRMIMKHFNELSATEAWTAMKKSHPFLEKEVRDSVIIEANTRKERMRKRNDQRIYSQLYEAMEALVHICRDGCKTIGPHDKDFKPNHATCNYEACKGLESLIRHFAGCKLRVPGGCVHCKRMWQLLELHSRVCAGSDQCRVPLCRNLKEKMEKQSKKDESRWKLLVKNVLGSKKIGGSPFFLPVTNC.

The segment at 14-37 (SADSSSVPIPPPLPSKSDGLKKKL) is disordered. In terms of domain architecture, BTB spans 60–128 (ADVVIYTDNG…LYSSCYEKEE (69 aa)). The TAZ-type zinc-finger motif lies at 238 to 330 (RIYSQLYEAM…SDQCRVPLCR (93 aa)). Residues 341–364 (KKDESRWKLLVKNVLGSKKIGGSP) are caM-binding.

As to quaternary structure, interacts with GTE11/BET10 through the BTB domain. Preferentially expressed in leaves, stems and flowers.

Its subcellular location is the cytoplasm. It functions in the pathway protein modification; protein ubiquitination. In terms of biological role, may act as a substrate-specific adapter of an E3 ubiquitin-protein ligase complex (CUL3-RBX1-BTB) which mediates the ubiquitination and subsequent proteasomal degradation of target proteins. The sequence is that of BTB/POZ and TAZ domain-containing protein 4 (BT4) from Arabidopsis thaliana (Mouse-ear cress).